The primary structure comprises 154 residues: Endoribonuclease YbeY (154 aa).

Residues His113, His117, and His123 each contribute to the Zn(2+) site.

Belongs to the endoribonuclease YbeY family. The cofactor is Zn(2+).

It is found in the cytoplasm. In terms of biological role, single strand-specific metallo-endoribonuclease involved in late-stage 70S ribosome quality control and in maturation of the 3' terminus of the 16S rRNA. In Verminephrobacter eiseniae (strain EF01-2), this protein is Endoribonuclease YbeY.